An 854-amino-acid chain; its full sequence is A-kinase anchor protein 4 (854 aa).

The propeptide occupies 1–188 (MMAYSDTTMM…MTAAKNTNNN (188 aa)). Phosphoserine occurs at positions 96, 130, 190, 213, 226, and 272. A disordered region spans residues 184–207 (NTNNNQSPSAPPAKPPSTQRAVIS). The tract at residues 219-232 (FYVNRLSSLVIQMA) is PKA-RI and PKA-RII subunit binding domain. Residues 287-323 (RGTGEESREGGQKSFLYSELSNKSKSGDKQMSQRESK) are disordered. Residues 288 to 297 (GTGEESREGG) are compositionally biased toward basic and acidic residues. A Phosphoserine modification is found at S300. A Phosphotyrosine modification is found at Y303. Phosphoserine occurs at positions 304 and 307. Basic and acidic residues predominate over residues 311 to 323 (KSGDKQMSQRESK). The interval 336–345 (YANQVASDMM) is PKA-RI-alpha subunit binding domain. Residues S342, S432, S443, S445, S447, S450, S464, and S492 each carry the phosphoserine modification. Phosphothreonine is present on T506. 4 positions are modified to phosphoserine: S536, S581, S627, and S703.

Belongs to the AKAP110 family. In terms of assembly, interacts with PRKAR1A and PRKAR2A. Interacts with ENO4. Interacts with QRICH2. In terms of processing, phosphorylated by STK33 during sperm flagella assembly. In terms of tissue distribution, testis specific; only expressed in round spermatids.

It localises to the cell projection. The protein resides in the cilium. Its subcellular location is the flagellum. Major structural component of sperm fibrous sheath. Plays a role in sperm motility. The sequence is that of A-kinase anchor protein 4 from Homo sapiens (Human).